Reading from the N-terminus, the 737-residue chain is Tripartite terminase subunit 3 (737 aa).

Residues 188–194 (VKKRARI) carry the Nuclear localization signal motif. The Walker A motif signature appears at 263–270 (VPRRHGKT). Positions 357–362 (LLFVDE) match the Walker B motif motif. E362 (for ATPase activity) is an active-site residue. Active-site for nuclease activity residues include D517, E589, and D712.

The protein belongs to the herpesviridae TRM3 protein family. As to quaternary structure, interacts with the terminase subunits TRM1 and TRM2. Interacts with portal protein.

The protein resides in the host nucleus. Its function is as follows. Component of the molecular motor that translocates viral genomic DNA in empty capsid during DNA packaging. Forms a tripartite terminase complex together with TRM1 and TRM2 in the host cytoplasm. Once the complex reaches the host nucleus, it interacts with the capsid portal vertex. This portal forms a ring in which genomic DNA is translocated into the capsid. TRM3 carries an RNase H-like nuclease activity that plays an important role for the cleavage of concatemeric viral DNA into unit length genomes. In Gallus gallus (Chicken), this protein is Tripartite terminase subunit 3.